We begin with the raw amino-acid sequence, 173 residues long: Probable glutathione peroxidase 5 (173 aa).

Residue G2 is the site of N-myristoyl glycine attachment. C46 is an active-site residue.

This sequence belongs to the glutathione peroxidase family. In terms of tissue distribution, ubiquitous.

The protein resides in the cell membrane. It carries out the reaction 2 glutathione + H2O2 = glutathione disulfide + 2 H2O. May constitute a glutathione peroxidase-like protective system against oxidative stresses. The polypeptide is Probable glutathione peroxidase 5 (GPX5) (Arabidopsis thaliana (Mouse-ear cress)).